The sequence spans 398 residues: Ornithine aminotransferase (398 aa).

Position 256 is an N6-(pyridoxal phosphate)lysine (Lys256).

It belongs to the class-III pyridoxal-phosphate-dependent aminotransferase family. OAT subfamily. The cofactor is pyridoxal 5'-phosphate.

It localises to the cytoplasm. It carries out the reaction a 2-oxocarboxylate + L-ornithine = L-glutamate 5-semialdehyde + an L-alpha-amino acid. It functions in the pathway amino-acid biosynthesis; L-proline biosynthesis; L-glutamate 5-semialdehyde from L-ornithine: step 1/1. Its function is as follows. Catalyzes the interconversion of ornithine to glutamate semialdehyde. The polypeptide is Ornithine aminotransferase (Halalkalibacterium halodurans (strain ATCC BAA-125 / DSM 18197 / FERM 7344 / JCM 9153 / C-125) (Bacillus halodurans)).